The sequence spans 223 residues: Ribose-5-phosphate isomerase A (223 aa).

Residues 29 to 32, 82 to 85, and 95 to 98 each bind substrate; these read TGST, DGAD, and KGGG. The Proton acceptor role is filled by Glu104. Lys122 lines the substrate pocket.

Belongs to the ribose 5-phosphate isomerase family. In terms of assembly, homodimer.

It catalyses the reaction aldehydo-D-ribose 5-phosphate = D-ribulose 5-phosphate. The protein operates within carbohydrate degradation; pentose phosphate pathway; D-ribose 5-phosphate from D-ribulose 5-phosphate (non-oxidative stage): step 1/1. In terms of biological role, catalyzes the reversible conversion of ribose-5-phosphate to ribulose 5-phosphate. The chain is Ribose-5-phosphate isomerase A from Neisseria meningitidis serogroup C / serotype 2a (strain ATCC 700532 / DSM 15464 / FAM18).